The sequence spans 1059 residues: Carbamoyl phosphate synthase large chain (1059 aa).

The tract at residues 1–401 (MPKRTDIHKI…ALLKAVASLE (401 aa)) is carboxyphosphate synthetic domain. Positions 129, 169, 175, 176, 208, 210, 215, 241, 242, 243, 284, and 298 each coordinate ATP. Residues 133–327 (KELMQELGEP…IAKLAAKIAV (195 aa)) form the ATP-grasp 1 domain. Mg(2+)-binding residues include Gln284, Glu298, and Asn300. Gln284, Glu298, and Asn300 together coordinate Mn(2+). The segment at 402–546 (IDQKDLLSKE…YSTYETENES (145 aa)) is oligomerization domain. Positions 547–929 (RRSAKPSVLV…ALYKAFAGAG (383 aa)) are carbamoyl phosphate synthetic domain. The ATP-grasp 2 domain occupies 671-861 (DQVIKDLNLR…MAQLATKVIL (191 aa)). 10 residues coordinate ATP: Arg707, Ala746, Leu748, Glu752, Gly777, Val778, His779, Ser780, Gln820, and Glu832. Residues Gln820, Glu832, and Asn834 each coordinate Mg(2+). Positions 820, 832, and 834 each coordinate Mn(2+). Residues 930–1059 (MEVPDNGAVL…EMTSFKTTEL (130 aa)) form the MGS-like domain. Residues 930–1059 (MEVPDNGAVL…EMTSFKTTEL (130 aa)) are allosteric domain.

Belongs to the CarB family. Composed of two chains; the small (or glutamine) chain promotes the hydrolysis of glutamine to ammonia, which is used by the large (or ammonia) chain to synthesize carbamoyl phosphate. Tetramer of heterodimers (alpha,beta)4. Mg(2+) serves as cofactor. Mn(2+) is required as a cofactor.

The enzyme catalyses hydrogencarbonate + L-glutamine + 2 ATP + H2O = carbamoyl phosphate + L-glutamate + 2 ADP + phosphate + 2 H(+). It carries out the reaction hydrogencarbonate + NH4(+) + 2 ATP = carbamoyl phosphate + 2 ADP + phosphate + 2 H(+). It participates in amino-acid biosynthesis; L-arginine biosynthesis; carbamoyl phosphate from bicarbonate: step 1/1. It functions in the pathway pyrimidine metabolism; UMP biosynthesis via de novo pathway; (S)-dihydroorotate from bicarbonate: step 1/3. In terms of biological role, large subunit of the glutamine-dependent carbamoyl phosphate synthetase (CPSase). CPSase catalyzes the formation of carbamoyl phosphate from the ammonia moiety of glutamine, carbonate, and phosphate donated by ATP, constituting the first step of 2 biosynthetic pathways, one leading to arginine and/or urea and the other to pyrimidine nucleotides. The large subunit (synthetase) binds the substrates ammonia (free or transferred from glutamine from the small subunit), hydrogencarbonate and ATP and carries out an ATP-coupled ligase reaction, activating hydrogencarbonate by forming carboxy phosphate which reacts with ammonia to form carbamoyl phosphate. The chain is Carbamoyl phosphate synthase large chain from Limosilactobacillus fermentum (strain NBRC 3956 / LMG 18251) (Lactobacillus fermentum).